Consider the following 169-residue polypeptide: Centrin-1 (169 aa).

The segment at 1–21 (MHSRKGASSLPRGRGAGKKTE) is essential for homooligomerization. The disordered stretch occupies residues 1 to 25 (MHSRKGASSLPRGRGAGKKTELTEE). 4 consecutive EF-hand domains span residues 25-60 (EQRQEIKEAFDLFDTDGSGCIDAKELKVAMRALGFE), 61-96 (PKKEEIRKMIADVDKDGTGSVDFQEFLSLMTVKMAE), 98-133 (DPREEILKAFRLFDDDETGKISFKNLKRVSKELGEN), and 134-169 (LTDEELQEMIDEADRDGDGEINEEEFIRIMRKTNLF). Residues aspartate 38, aspartate 40, serine 42, cysteine 44, glutamate 49, aspartate 74, aspartate 76, threonine 78, serine 80, and glutamate 85 each coordinate Ca(2+).

The protein belongs to the centrin family. In terms of assembly, monomer. Homooligomerizes in a Ca(2+)-dependent manner. Interaction via the C-terminus with other proteins disrupts and/or prevents homooligomerization. Interacts with SFI1.

Its subcellular location is the cytoplasm. The protein resides in the cytoskeleton. It localises to the microtubule organizing center. The protein localises to the centrosome. Its function is as follows. Acts as a calcium sensor. Part of the centrosome outer core complex. The sequence is that of Centrin-1 from Toxoplasma gondii (strain ATCC 50611 / Me49).